Consider the following 867-residue polypeptide: Piwi-like protein 1 (867 aa).

A compositionally biased stretch (basic residues) spans 1-11 (MTGRARARARG). A disordered region spans residues 1 to 70 (MTGRARARAR…QRGPQDAPKT (70 aa)). The segment covering 28–44 (AQKTLPSHPSEQRQSLQ) has biased composition (polar residues). The PAZ domain maps to 286–397 (TVLDFMYSLY…LIPELCYLTG (112 aa)). Residues 324-326 (TYR) are required for binding 2'-O-methylated 3'-end of piRNAs. An MID region region spans residues 485 to 621 (SRETRVAPLI…LQMNCKMGGE (137 aa)). One can recognise a Piwi domain in the interval 561–853 (IVVCILSSTR…LAFLVGQSIH (293 aa)). Active-site residues include D638, E676, D708, and H842.

This sequence belongs to the argonaute family. Piwi subfamily. It depends on Mg(2+) as a cofactor. Methylated on arginine residues; required for the interaction with Tudor domain-containing protein and subsequent localization to the meiotic nuage, also named P granule.

It is found in the cytoplasm. Its function is as follows. Endoribonuclease that plays a central role in postnatal germ cells by repressing transposable elements and preventing their mobilization, which is essential for the germline integrity. Acts via the piRNA metabolic process, which mediates the repression of transposable elements during meiosis by forming complexes composed of piRNAs and Piwi proteins and govern the methylation and subsequent repression of transposons. Directly binds methylated piRNAs, a class of 24 to 30 nucleotide RNAs that are generated by a Dicer-independent mechanism and are primarily derived from transposons and other repeated sequence elements. Strongly prefers a uridine in the first position of their guide (g1U preference, also named 1U-bias). Besides their function in transposable elements repression, piRNAs are probably involved in other processes during meiosis such as translation regulation. Not involved in the piRNA amplification loop, also named ping-pong amplification cycle. Acts as an endoribonuclease that cleaves transposon messenger RNAs. In Gallus gallus (Chicken), this protein is Piwi-like protein 1 (PIWIL1).